The following is a 267-amino-acid chain: Ribosomal RNA small subunit methyltransferase A (267 aa).

S-adenosyl-L-methionine contacts are provided by Asn-18, Leu-20, Gly-45, Glu-66, Asp-91, and Asn-112.

Belongs to the class I-like SAM-binding methyltransferase superfamily. rRNA adenine N(6)-methyltransferase family. RsmA subfamily.

It is found in the cytoplasm. The enzyme catalyses adenosine(1518)/adenosine(1519) in 16S rRNA + 4 S-adenosyl-L-methionine = N(6)-dimethyladenosine(1518)/N(6)-dimethyladenosine(1519) in 16S rRNA + 4 S-adenosyl-L-homocysteine + 4 H(+). Functionally, specifically dimethylates two adjacent adenosines (A1518 and A1519) in the loop of a conserved hairpin near the 3'-end of 16S rRNA in the 30S particle. May play a critical role in biogenesis of 30S subunits. In Shewanella pealeana (strain ATCC 700345 / ANG-SQ1), this protein is Ribosomal RNA small subunit methyltransferase A.